Reading from the N-terminus, the 342-residue chain is GTPase Obg (342 aa).

The Obg domain maps to 1–159 (MQFIDQAKIE…KQLRLELKLL (159 aa)). An OBG-type G domain is found at 160–330 (AEVGIIGLPN…MLQEIWGILD (171 aa)). GTP-binding positions include 166–173 (GLPNAGKS), 191–195 (FTTLI), 213–216 (DIPG), 280–283 (NKID), and 311–313 (SAV). Residues serine 173 and threonine 193 each contribute to the Mg(2+) site.

This sequence belongs to the TRAFAC class OBG-HflX-like GTPase superfamily. OBG GTPase family. As to quaternary structure, monomer. It depends on Mg(2+) as a cofactor.

Its subcellular location is the cytoplasm. Its function is as follows. An essential GTPase which binds GTP, GDP and possibly (p)ppGpp with moderate affinity, with high nucleotide exchange rates and a fairly low GTP hydrolysis rate. Plays a role in control of the cell cycle, stress response, ribosome biogenesis and in those bacteria that undergo differentiation, in morphogenesis control. The protein is GTPase Obg of Nostoc punctiforme (strain ATCC 29133 / PCC 73102).